The following is a 346-amino-acid chain: Dihydroorotase (346 aa).

Zn(2+) is bound by residues His-14 and His-16. Substrate-binding positions include 16–18 (HLR) and Asn-42. Lys-100, His-137, and His-175 together coordinate Zn(2+). N6-carboxylysine is present on Lys-100. His-137 provides a ligand contact to substrate. Residue Leu-220 participates in substrate binding. Residue Asp-248 coordinates Zn(2+). Residue Asp-248 is part of the active site. Residues His-252 and Ala-264 each contribute to the substrate site.

It belongs to the metallo-dependent hydrolases superfamily. DHOase family. Class II DHOase subfamily. As to quaternary structure, homodimer. It depends on Zn(2+) as a cofactor.

The enzyme catalyses (S)-dihydroorotate + H2O = N-carbamoyl-L-aspartate + H(+). It functions in the pathway pyrimidine metabolism; UMP biosynthesis via de novo pathway; (S)-dihydroorotate from bicarbonate: step 3/3. Functionally, catalyzes the reversible cyclization of carbamoyl aspartate to dihydroorotate. The chain is Dihydroorotase from Ruegeria pomeroyi (strain ATCC 700808 / DSM 15171 / DSS-3) (Silicibacter pomeroyi).